Here is a 355-residue protein sequence, read N- to C-terminus: Putative early 40.3 kDa protein (355 aa).

Its function is as follows. This protein is required for viral late gene expression. The chain is Putative early 40.3 kDa protein (DA41) from Orgyia pseudotsugata multicapsid polyhedrosis virus (OpMNPV).